The following is a 283-amino-acid chain: uncharacterized protein (283 aa).

The N-terminal stretch at Met-1–Ala-25 is a signal peptide. A lipid anchor (N-palmitoyl cysteine) is attached at Cys-26. A lipid anchor (S-diacylglycerol cysteine) is attached at Cys-26.

It belongs to the MG439/MG440 family.

The protein localises to the cell membrane. This is an uncharacterized protein from Mycoplasma pneumoniae (strain ATCC 29342 / M129 / Subtype 1) (Mycoplasmoides pneumoniae).